The following is an 81-amino-acid chain: Sulfur carrier protein TusA (81 aa).

The active-site Cysteine persulfide intermediate is the cysteine 19.

Belongs to the sulfur carrier protein TusA family. In terms of assembly, interacts with IscS.

The protein localises to the cytoplasm. Its pathway is tRNA modification. Sulfur carrier protein involved in sulfur trafficking in the cell. Part of a sulfur-relay system required for 2-thiolation during synthesis of 2-thiouridine of the modified wobble base 5-methylaminomethyl-2-thiouridine (mnm(5)s(2)U) in tRNA. Interacts with IscS and stimulates its cysteine desulfurase activity. Accepts an activated sulfur from IscS, which is then transferred to TusD, and thus determines the direction of sulfur flow from IscS to 2-thiouridine formation. Also appears to be involved in sulfur transfer for the biosynthesis of molybdopterin. This Escherichia coli O17:K52:H18 (strain UMN026 / ExPEC) protein is Sulfur carrier protein TusA.